The chain runs to 639 residues: Serine/threonine-protein phosphatase 2B catalytic subunit A1 (639 aa).

The Fe cation site is built by Asp-120, His-122, and Asp-148. Residues Asp-148 and Asn-180 each contribute to the Zn(2+) site. The active-site Proton donor is His-181. Residues His-229 and His-311 each coordinate Zn(2+). The span at 494 to 503 (KSDIENERLP) shows a compositional bias: basic and acidic residues. Residues 494–602 (KSDIENERLP…PSTRRRSLEN (109 aa)) form a disordered region. 2 stretches are compositionally biased toward low complexity: residues 515–527 (ASPS…PATP) and 546–572 (TPIS…GGPP).

It belongs to the PPP phosphatase family. PP-2B subfamily. Composed of two components (A and B), the A component is the catalytic subunit and the B component confers calcium sensitivity. Fe(3+) is required as a cofactor. Zn(2+) serves as cofactor.

The catalysed reaction is O-phospho-L-seryl-[protein] + H2O = L-seryl-[protein] + phosphate. It catalyses the reaction O-phospho-L-threonyl-[protein] + H2O = L-threonyl-[protein] + phosphate. Calcium-dependent, calmodulin-stimulated protein phosphatase. This subunit may have a role in the calmodulin activation of calcineurin. The sequence is that of Serine/threonine-protein phosphatase 2B catalytic subunit A1 (CNA1) from Cryptococcus neoformans var. grubii serotype A (strain H99 / ATCC 208821 / CBS 10515 / FGSC 9487) (Filobasidiella neoformans var. grubii).